Here is a 215-residue protein sequence, read N- to C-terminus: Uridine kinase (215 aa).

16–23 contributes to the ATP binding site; sequence GASASGKS.

It belongs to the uridine kinase family.

It is found in the cytoplasm. The enzyme catalyses uridine + ATP = UMP + ADP + H(+). The catalysed reaction is cytidine + ATP = CMP + ADP + H(+). It functions in the pathway pyrimidine metabolism; CTP biosynthesis via salvage pathway; CTP from cytidine: step 1/3. Its pathway is pyrimidine metabolism; UMP biosynthesis via salvage pathway; UMP from uridine: step 1/1. The protein is Uridine kinase of Aliivibrio fischeri (strain ATCC 700601 / ES114) (Vibrio fischeri).